The chain runs to 165 residues: Putative inactive neutral ceramidase B (165 aa).

It belongs to the neutral ceramidase family. In terms of tissue distribution, ubiquitous. Expression is reduced with increasing age and in late-onset Alzheimer disease (LOAD) patients. This reduction is even more pronounced in patients with an affected mother.

This Homo sapiens (Human) protein is Putative inactive neutral ceramidase B.